Reading from the N-terminus, the 414-residue chain is CCA-adding enzyme (414 aa).

ATP-binding residues include G8 and R11. Residues G8 and R11 each contribute to the CTP site. The Mg(2+) site is built by D21 and D23. ATP is bound by residues R92, R138, and R141. CTP-binding residues include R92, R138, and R141.

Belongs to the tRNA nucleotidyltransferase/poly(A) polymerase family. Bacterial CCA-adding enzyme type 2 subfamily. Mg(2+) is required as a cofactor.

It carries out the reaction a tRNA precursor + 2 CTP + ATP = a tRNA with a 3' CCA end + 3 diphosphate. The catalysed reaction is a tRNA with a 3' CCA end + 2 CTP + ATP = a tRNA with a 3' CCACCA end + 3 diphosphate. Catalyzes the addition and repair of the essential 3'-terminal CCA sequence in tRNAs without using a nucleic acid template. Adds these three nucleotides in the order of C, C, and A to the tRNA nucleotide-73, using CTP and ATP as substrates and producing inorganic pyrophosphate. tRNA 3'-terminal CCA addition is required both for tRNA processing and repair. Also involved in tRNA surveillance by mediating tandem CCA addition to generate a CCACCA at the 3' terminus of unstable tRNAs. While stable tRNAs receive only 3'-terminal CCA, unstable tRNAs are marked with CCACCA and rapidly degraded. This chain is CCA-adding enzyme, found in Buchnera aphidicola subsp. Cinara cedri (strain Cc).